A 302-amino-acid polypeptide reads, in one-letter code: MDKDKVLLVLHGKQAGNEEVRAAVAAQREAGRELAVRVTWEDGDARRIVEEALAAGFATLVAGGGDGTLREVAEALARGRGEASLAILPLGTANDFARAAGIPLEPAAALALLDQTARPIDLGAVNGKLFLNMATGGFGSKVTANTSEDLKKVLGGAAYLLTGLTRFSEVHAAQGRFSAPDFQWEGEFLALGIGNGRQAGGGHVLCPQARVDDGLLDVSILPTPQDMVGTLGTLLGGGNGVESLFVRARVPWLEVEAAEGLDVNLDGEPLEGRKLRFSVSPGALRVHLPAGSPLLREPPRED.

Residues 1-129 form the DAGKc domain; that stretch reads MDKDKVLLVL…IDLGAVNGKL (129 aa). ATP contacts are provided by residues Thr-39, 65 to 71, and Thr-92; that span reads GDGTLRE. Arg-210, Asp-213, and Leu-215 together coordinate Mg(2+). Catalysis depends on Glu-268, which acts as the Proton acceptor.

It belongs to the diacylglycerol/lipid kinase family. YegS lipid kinase subfamily. It depends on Mg(2+) as a cofactor. Ca(2+) serves as cofactor.

Its subcellular location is the cytoplasm. Probably phosphorylates lipids; the in vivo substrate is unknown. This Pseudomonas aeruginosa (strain UCBPP-PA14) protein is Probable lipid kinase YegS-like.